Here is a 251-residue protein sequence, read N- to C-terminus: Triosephosphate isomerase (251 aa).

9–11 is a binding site for substrate; the sequence is NWK. His95 (electrophile) is an active-site residue. Residue Glu167 is the Proton acceptor of the active site. Residues Gly173, Ser213, and 234-235 contribute to the substrate site; that span reads GG. Phosphoserine is present on Ser213.

It belongs to the triosephosphate isomerase family. Homodimer.

The protein localises to the cytoplasm. The catalysed reaction is D-glyceraldehyde 3-phosphate = dihydroxyacetone phosphate. The protein operates within carbohydrate biosynthesis; gluconeogenesis. It functions in the pathway carbohydrate degradation; glycolysis; D-glyceraldehyde 3-phosphate from glycerone phosphate: step 1/1. Functionally, involved in the gluconeogenesis. Catalyzes stereospecifically the conversion of dihydroxyacetone phosphate (DHAP) to D-glyceraldehyde-3-phosphate (G3P). In Shouchella clausii (strain KSM-K16) (Alkalihalobacillus clausii), this protein is Triosephosphate isomerase.